The following is a 347-amino-acid chain: tRNA(Ile)-lysidine synthase (347 aa).

Residue 27-32 (SGGADS) participates in ATP binding. The interval 243–263 (AAPASPSHVEGEASAPHDAAH) is disordered.

It belongs to the tRNA(Ile)-lysidine synthase family.

The protein localises to the cytoplasm. It catalyses the reaction cytidine(34) in tRNA(Ile2) + L-lysine + ATP = lysidine(34) in tRNA(Ile2) + AMP + diphosphate + H(+). Its function is as follows. Ligates lysine onto the cytidine present at position 34 of the AUA codon-specific tRNA(Ile) that contains the anticodon CAU, in an ATP-dependent manner. Cytidine is converted to lysidine, thus changing the amino acid specificity of the tRNA from methionine to isoleucine. This is tRNA(Ile)-lysidine synthase from Nitratidesulfovibrio vulgaris (strain ATCC 29579 / DSM 644 / CCUG 34227 / NCIMB 8303 / VKM B-1760 / Hildenborough) (Desulfovibrio vulgaris).